The chain runs to 113 residues: ATP-dependent Clp protease adapter protein ClpS (113 aa).

A disordered region spans residues 1–26 (MLMQPLMMSDNPDDESDLGLLTKTRP).

The protein belongs to the ClpS family. Binds to the N-terminal domain of the chaperone ClpA.

Involved in the modulation of the specificity of the ClpAP-mediated ATP-dependent protein degradation. This chain is ATP-dependent Clp protease adapter protein ClpS, found in Ruegeria sp. (strain TM1040) (Silicibacter sp.).